The following is a 640-amino-acid chain: Glutamyl-tRNA(Gln) amidotransferase subunit E (640 aa).

This sequence belongs to the GatB/GatE family. GatE subfamily. As to quaternary structure, heterodimer of GatD and GatE.

The enzyme catalyses L-glutamyl-tRNA(Gln) + L-glutamine + ATP + H2O = L-glutaminyl-tRNA(Gln) + L-glutamate + ADP + phosphate + H(+). Functionally, allows the formation of correctly charged Gln-tRNA(Gln) through the transamidation of misacylated Glu-tRNA(Gln) in organisms which lack glutaminyl-tRNA synthetase. The reaction takes place in the presence of glutamine and ATP through an activated gamma-phospho-Glu-tRNA(Gln). The GatDE system is specific for glutamate and does not act on aspartate. The protein is Glutamyl-tRNA(Gln) amidotransferase subunit E of Methanopyrus kandleri (strain AV19 / DSM 6324 / JCM 9639 / NBRC 100938).